Reading from the N-terminus, the 526-residue chain is Importin subunit alpha-1a (526 aa).

One can recognise an IBB domain in the interval 1–58 (MSLRPSERVEVRRNRYKVAVDAEEGRRRREDNMVEIRKSRREESLLKKRREGLQAQAP). ARM repeat units lie at residues 105-145 (SPPI…NIAS), 148-187 (SENT…NVAG), 190-230 (PKCR…NFCR), 232-271 (KPQP…YLSD), 274-313 (NDKI…NIVT), 316-356 (DAQT…NITA), 359-398 (KDQI…NATS), and 402-441 (HDQI…NILK).

The protein belongs to the importin alpha family. As to quaternary structure, forms a complex with importin subunit beta-1. The whole complex, most stable and composed of importin alpha, importin beta and NLS substrate, is referred to as PTAC or pore targeting complex. Interacts with mungbean yellow mosaic virus capsid protein. In terms of tissue distribution, highly expressed in callus, followed by root and etiolated leaf. Low expression in green leaf.

The protein localises to the cytoplasm. It is found in the perinuclear region. In terms of biological role, functions in nuclear protein import. Binds specifically and directly to substrates containing either a simple or bipartite NLS motif. Promotes docking of import substrates to the nuclear envelope. The chain is Importin subunit alpha-1a from Oryza sativa subsp. japonica (Rice).